The sequence spans 390 residues: Phosphopentomutase (390 aa).

Mn(2+) is bound by residues D10, D282, H287, D323, H324, and H335.

The protein belongs to the phosphopentomutase family. Mn(2+) serves as cofactor.

It localises to the cytoplasm. The catalysed reaction is 2-deoxy-alpha-D-ribose 1-phosphate = 2-deoxy-D-ribose 5-phosphate. It carries out the reaction alpha-D-ribose 1-phosphate = D-ribose 5-phosphate. Its pathway is carbohydrate degradation; 2-deoxy-D-ribose 1-phosphate degradation; D-glyceraldehyde 3-phosphate and acetaldehyde from 2-deoxy-alpha-D-ribose 1-phosphate: step 1/2. Isomerase that catalyzes the conversion of deoxy-ribose 1-phosphate (dRib-1-P) and ribose 1-phosphate (Rib-1-P) to deoxy-ribose 5-phosphate (dRib-5-P) and ribose 5-phosphate (Rib-5-P), respectively. The protein is Phosphopentomutase of Lachnoclostridium phytofermentans (strain ATCC 700394 / DSM 18823 / ISDg) (Clostridium phytofermentans).